Here is a 309-residue protein sequence, read N- to C-terminus: Formimidoylglutamase (309 aa).

Mn(2+) is bound by residues His-120, Asp-145, His-147, Asp-149, Asp-236, and Asp-238.

Belongs to the arginase family. It depends on Mn(2+) as a cofactor.

It carries out the reaction N-formimidoyl-L-glutamate + H2O = formamide + L-glutamate. It functions in the pathway amino-acid degradation; L-histidine degradation into L-glutamate; L-glutamate from N-formimidoyl-L-glutamate (hydrolase route): step 1/1. Functionally, catalyzes the conversion of N-formimidoyl-L-glutamate to L-glutamate and formamide. This Chromobacterium violaceum (strain ATCC 12472 / DSM 30191 / JCM 1249 / CCUG 213 / NBRC 12614 / NCIMB 9131 / NCTC 9757 / MK) protein is Formimidoylglutamase.